The chain runs to 172 residues: Single-stranded DNA-binding protein A (172 aa).

Residues methionine 1–glutamate 104 form the SSB domain. Phosphotyrosine is present on tyrosine 82. The interval leucine 103–phenylalanine 172 is disordered. The span at asparagine 107 to glutamine 131 shows a compositional bias: gly residues. Residues asparagine 132–asparagine 149 show a composition bias toward low complexity. The short motif at aspartate 167–phenylalanine 172 is the Important for interaction with partner proteins element.

In terms of assembly, homotetramer. Interacts with proteins involved in DNA metabolism such as PriA, RecQ, RecG, RecS, DnaE, RarA, RecJ, RecO, SbcC, RecD2 (formerly YrrC), XseA and Ung. Interacts with RecQ via its 10 C-terminal residues. Interacts with RecD2. In terms of processing, phosphorylated by YwqD, which increases ssDNA affinity; dephosphorylated by YwqE.

It is found in the cytoplasm. Its subcellular location is the nucleoid. Functionally, plays an important role in DNA replication, recombination and repair. Binds to single-stranded (ss)DNA and to an array of partner proteins to recruit them to their sites of action during DNA metabolism. Associates with oriC, this requires DnaA. SsbA binding to ssDNA prevents DnaB and DnaD individually from binding to DNA. Has a 20-fold higher affinity for ssDNA than SsbB; SsbA and DprA activate the homologous DNA strand exchange function of RecA-ATP. Enhances the activity of 3'-5' DNA helicase RecQ. In Bacillus subtilis (strain 168), this protein is Single-stranded DNA-binding protein A (ssbA).